A 139-amino-acid polypeptide reads, in one-letter code: Small ribosomal subunit protein bS16 (139 aa).

A disordered region spans residues 84–139 (KGEPAPAPLLQPAEKAARPSFEAIGGEDEGKGEAITQKKKADKRDEAAAESSASEA).

It belongs to the bacterial ribosomal protein bS16 family.

This Streptomyces lividans protein is Small ribosomal subunit protein bS16.